We begin with the raw amino-acid sequence, 162 residues long: MPDPARARRLAKRINTIVASAIEFEIKDPGLDGVTIVDTKVTADLHDATVFYTVMGRTLDDEPDYGAAAAALERAKGALRTMVGAGTGVRFTPTLTFTRDTTSDSVARMDELLARARAADADLARVRSGAKPAGEADPYRESGSGVEPGRDGSIGDDDQPEY.

Residues 124–162 (ARVRSGAKPAGEADPYRESGSGVEPGRDGSIGDDDQPEY) form a disordered region.

This sequence belongs to the RbfA family. Monomer. Binds 30S ribosomal subunits, but not 50S ribosomal subunits or 70S ribosomes.

It localises to the cytoplasm. In terms of biological role, one of several proteins that assist in the late maturation steps of the functional core of the 30S ribosomal subunit. Associates with free 30S ribosomal subunits (but not with 30S subunits that are part of 70S ribosomes or polysomes). Required for efficient processing of 16S rRNA. May interact with the 5'-terminal helix region of 16S rRNA. This chain is Ribosome-binding factor A, found in Mycolicibacterium paratuberculosis (strain ATCC BAA-968 / K-10) (Mycobacterium paratuberculosis).